Consider the following 972-residue polypeptide: Coatomer subunit beta (972 aa).

HEAT repeat units follow at residues 79 to 113 (LLYF…DLQH), 133 to 170 (ELLE…VSEH), 317 to 354 (GCLE…SRNI), 397 to 434 (EIAA…LYPQ), and 481 to 518 (RQSI…QAGP). The segment at 494 to 522 (LKNQRKSQDEDDEATEESATKQAGPVILP) is disordered.

In terms of assembly, oligomeric complex that consists of at least the alpha, beta, beta', gamma, delta, epsilon and zeta subunits.

It localises to the cytoplasm. The protein localises to the golgi apparatus membrane. Its subcellular location is the cytoplasmic vesicle. The protein resides in the COPI-coated vesicle membrane. Functionally, the coatomer is a cytosolic protein complex that binds to dilysine motifs and reversibly associates with Golgi non-clathrin-coated vesicles, which further mediate biosynthetic protein transport from the ER, via the Golgi up to the trans Golgi network. Coatomer complex is required for budding from Golgi membranes, and is essential for the retrograde Golgi-to-ER transport of dilysine-tagged proteins. The polypeptide is Coatomer subunit beta (Candida glabrata (strain ATCC 2001 / BCRC 20586 / JCM 3761 / NBRC 0622 / NRRL Y-65 / CBS 138) (Yeast)).